The primary structure comprises 424 residues: Imidazolonepropionase (424 aa).

Positions 85 and 87 each coordinate Fe(3+). Positions 85 and 87 each coordinate Zn(2+). Arg94, Tyr157, and His190 together coordinate 4-imidazolone-5-propanoate. Residue Tyr157 participates in N-formimidoyl-L-glutamate binding. His255 is a Fe(3+) binding site. His255 serves as a coordination point for Zn(2+). Glu258 serves as a coordination point for 4-imidazolone-5-propanoate. A Fe(3+)-binding site is contributed by Asp329. Position 329 (Asp329) interacts with Zn(2+). The N-formimidoyl-L-glutamate site is built by Asn331 and Gly333. Ser334 serves as a coordination point for 4-imidazolone-5-propanoate.

Belongs to the metallo-dependent hydrolases superfamily. HutI family. Zn(2+) serves as cofactor. It depends on Fe(3+) as a cofactor.

The protein resides in the cytoplasm. It carries out the reaction 4-imidazolone-5-propanoate + H2O = N-formimidoyl-L-glutamate. It functions in the pathway amino-acid degradation; L-histidine degradation into L-glutamate; N-formimidoyl-L-glutamate from L-histidine: step 3/3. In terms of biological role, catalyzes the hydrolytic cleavage of the carbon-nitrogen bond in imidazolone-5-propanoate to yield N-formimidoyl-L-glutamate. It is the third step in the universal histidine degradation pathway. The polypeptide is Imidazolonepropionase (Brevibacillus brevis (strain 47 / JCM 6285 / NBRC 100599)).